The sequence spans 429 residues: Dual-specificity RNA methyltransferase RlmN (429 aa).

The interval 1–23 is disordered; it reads MRAMQTHTEIAPMPIPGHVDPVP. Catalysis depends on Glu128, which acts as the Proton acceptor. Residues 134 to 397 enclose the Radical SAM core domain; the sequence is DADRGTLCVS…APVRTPRGRD (264 aa). A disulfide bridge connects residues Cys141 and Cys402. [4Fe-4S] cluster is bound by residues Cys148, Cys152, and Cys155. S-adenosyl-L-methionine is bound by residues 226–227, Ser258, 280–282, and Asn359; these read GE and SLH. The S-methylcysteine intermediate role is filled by Cys402.

It belongs to the radical SAM superfamily. RlmN family. Requires [4Fe-4S] cluster as cofactor.

It localises to the cytoplasm. It carries out the reaction adenosine(2503) in 23S rRNA + 2 reduced [2Fe-2S]-[ferredoxin] + 2 S-adenosyl-L-methionine = 2-methyladenosine(2503) in 23S rRNA + 5'-deoxyadenosine + L-methionine + 2 oxidized [2Fe-2S]-[ferredoxin] + S-adenosyl-L-homocysteine. It catalyses the reaction adenosine(37) in tRNA + 2 reduced [2Fe-2S]-[ferredoxin] + 2 S-adenosyl-L-methionine = 2-methyladenosine(37) in tRNA + 5'-deoxyadenosine + L-methionine + 2 oxidized [2Fe-2S]-[ferredoxin] + S-adenosyl-L-homocysteine. Its function is as follows. Specifically methylates position 2 of adenine 2503 in 23S rRNA and position 2 of adenine 37 in tRNAs. m2A2503 modification seems to play a crucial role in the proofreading step occurring at the peptidyl transferase center and thus would serve to optimize ribosomal fidelity. The sequence is that of Dual-specificity RNA methyltransferase RlmN from Novosphingobium aromaticivorans (strain ATCC 700278 / DSM 12444 / CCUG 56034 / CIP 105152 / NBRC 16084 / F199).